A 483-amino-acid chain; its full sequence is FAD-linked oxidoreductase easE (483 aa).

The 184-residue stretch at 10–193 (QGRLPLYSAV…TEATVRVFSD (184 aa)) folds into the FAD-binding PCMH-type domain.

The protein belongs to the oxygen-dependent FAD-linked oxidoreductase family. Requires FAD as cofactor.

It participates in alkaloid biosynthesis; ergot alkaloid biosynthesis. FAD-linked oxidoreductase; part of the gene cluster that mediates the biosynthesis of fungal ergot alkaloid. DmaW catalyzes the first step of ergot alkaloid biosynthesis by condensing dimethylallyl diphosphate (DMAP) and tryptophan to form 4-dimethylallyl-L-tryptophan. The second step is catalyzed by the methyltransferase easF that methylates 4-dimethylallyl-L-tryptophan in the presence of S-adenosyl-L-methionine, resulting in the formation of 4-dimethylallyl-L-abrine. The catalase easC and the FAD-dependent oxidoreductase easE then transform 4-dimethylallyl-L-abrine to chanoclavine-I which is further oxidized by easD in the presence of NAD(+), resulting in the formation of chanoclavine-I aldehyde. Agroclavine dehydrogenase easG then mediates the conversion of chanoclavine-I aldehyde to agroclavine via a non-enzymatic adduct reaction: the substrate is an iminium intermediate that is formed spontaneously from chanoclavine-I aldehyde in the presence of glutathione. The presence of easA is not required to complete this reaction. Further conversion of agroclavine to paspalic acid is a two-step process involving oxidation of agroclavine to elymoclavine and of elymoclavine to paspalic acid, the second step being performed by the elymoclavine oxidase cloA. Paspalic acid is then further converted to D-lysergic acid. Ergopeptines are assembled from D-lysergic acid and three different amino acids by the D-lysergyl-peptide-synthetases composed each of a monomudular and a trimodular nonribosomal peptide synthetase subunit. LpsB and lpsC encode the monomodular subunits responsible for D-lysergic acid activation and incorporation into the ergopeptine backbone. LpsA1 and A2 subunits encode the trimodular nonribosomal peptide synthetase assembling the tripeptide portion of ergopeptines. LpsA1 is responsible for formation of the major ergopeptine, ergotamine, and lpsA2 for alpha-ergocryptine, the minor ergopeptine of the total alkaloid mixture elaborated by C.purpurea. D-lysergyl-tripeptides are assembled by the nonribosomal peptide synthetases and released as N-(D-lysergyl-aminoacyl)-lactams. Cyclolization of the D-lysergyl-tripeptides is performed by the Fe(2+)/2-ketoglutarate-dependent dioxygenase easH which introduces a hydroxyl group into N-(D-lysergyl-aminoacyl)-lactam at alpha-C of the aminoacyl residue followed by spontaneous condensation with the terminal lactam carbonyl group. This is FAD-linked oxidoreductase easE from Claviceps purpurea (Ergot fungus).